We begin with the raw amino-acid sequence, 275 residues long: Probable aquaporin NIP7-1 (275 aa).

Basic and acidic residues predominate over residues 1 to 11 (MNGEARSRVVD). A disordered region spans residues 1–26 (MNGEARSRVVDQEAGSTPSTLRDEDH). A run of 2 helical transmembrane segments spans residues 47 to 67 (IVMA…GVIS) and 76 to 96 (VGLL…VYSI). Positions 105 to 107 (NPS) match the NPA 1 motif. The next 3 membrane-spanning stretches (helical) occupy residues 127 to 147 (ITAQ…VYGV), 161 to 181 (VSAF…ASAL), and 192 to 212 (LTGF…GPIS). Positions 217-219 (NPA) match the NPA 2 motif. The helical transmembrane segment at 231-251 (FEDLWIYMTAPVIGAIIGVLT) threads the bilayer. Ser-272 is modified (phosphoserine).

Belongs to the MIP/aquaporin (TC 1.A.8) family. NIP (TC 1.A.8.12) subfamily. Expressed in floral buds.

It localises to the membrane. Aquaporins facilitate the transport of water and small neutral solutes across cell membranes. The sequence is that of Probable aquaporin NIP7-1 (NIP7-1) from Arabidopsis thaliana (Mouse-ear cress).